The chain runs to 293 residues: MTSSYVGRFAPTPSGYLHFGSLVAAVASYLDARAVGGRWLVRMEDLDPPREVPGAQQAILETLERYGFEWDGAVERQSERFPAYAAVVEQLLRSGLAYACTCSRKQLEGFAGIYPGFCRDAGHAREDAAIRLRVPELEYRFVDRVQGEVRQHLGREVGDFVIQRRDGLYAYQLAVVLDDAWQGITDIVRGADLLDSTPRQLYLQELLGLSQPRYLHVPLIVQPDGHKLGKSYRSPPLPAEQAAAPLTRALRALGQRPPAELAQASASEALAWGVAHWDATRIPRCATLPEERL.

L-glutamate is bound by residues 8–12 and glutamate 44; that span reads RFAPT. The 'HIGH' region motif lies at 11–21; that stretch reads PTPSGYLHFGS. Residues cysteine 100, cysteine 102, tyrosine 114, and cysteine 118 each contribute to the Zn(2+) site. L-glutamate-binding residues include tyrosine 171 and arginine 189. The 'KMSKS' region signature appears at 227-231; that stretch reads KLGKS. Lysine 230 contributes to the ATP binding site.

It belongs to the class-I aminoacyl-tRNA synthetase family. GluQ subfamily. Zn(2+) serves as cofactor.

Functionally, catalyzes the tRNA-independent activation of glutamate in presence of ATP and the subsequent transfer of glutamate onto a tRNA(Asp). Glutamate is transferred on the 2-amino-5-(4,5-dihydroxy-2-cyclopenten-1-yl) moiety of the queuosine in the wobble position of the QUC anticodon. The sequence is that of Glutamyl-Q tRNA(Asp) synthetase from Pseudomonas aeruginosa (strain ATCC 15692 / DSM 22644 / CIP 104116 / JCM 14847 / LMG 12228 / 1C / PRS 101 / PAO1).